Here is a 764-residue protein sequence, read N- to C-terminus: Protective antigen (764 aa).

The N-terminal stretch at 1 to 29 (MKKRKVLIPLMALSTILVSSTGNLEVIQA) is a signal peptide. The domain 1, calcium-binding; LF and EF binding sites stretch occupies residues 30 to 287 (EVKQENRLLN…PEARHPLVAA (258 aa)). Residues 43–179 (SSSQGLLGYY…NKKEVISSDN (137 aa)) enclose the PA14 domain. The disordered stretch occupies residues 176-214 (SSDNLQLPELKQKSSNSRKKRSTSAGPTVPDRDNDGIPD). Residues D206, D208, D210, I212, and E217 each coordinate Ca(2+). The segment at 231–239 (FLSPWISNI) is alpha-clamp. The Ca(2+) site is built by S251, K254, and D264. The segment at 288–516 (YPIVHVDMEN…SEVLPQIQET (229 aa)) is domain 2, membrane insertion and heptamerization. The segment at 302-333 (KNEDQSTQNTDSQTRTISKNTSTSRTHTSEVH) is disordered. Over residues 306–327 (QSTQNTDSQTRTISKNTSTSRT) the composition is skewed to polar residues. The next 2 membrane-spanning stretches (beta stranded) occupy residues 331-342 (EVHGNAEVHASF) and 345-354 (IGGSVSAGFS). Residues 517–624 (TARIIFNGKD…KMNILIRDKR (108 aa)) are domain 3, heptamerization. The domain 4, binding to the receptor stretch occupies residues 625-764 (FHYDRNNIAV…IFSKKGYEIG (140 aa)).

The protein belongs to the bacterial binary toxin family. In terms of assembly, interacts with host ANTXR1 and ANTXR2. As to quaternary structure, homooligomer; homooligomerizes to form homoheptamers (PA-63(7)) or homooctamers (PA-63(8)). PA-63(7) or PA-63(8) form ring-shaped oligomers that are in a pre-pore conformation, which do not penetrate the host membrane. PA-63(8) displays an enhanced stability, suggesting that this form circulates in the blood to reach and exert toxicity even in distant tissues. Interacts with lethal factor (LF) and edema factor (EF); can bind LF and EF simultaneously and interaction takes place following homooligomerization on the host cell membrane. PA-63(7) homoheptamer interacts with three molecules of LF to form the PA(7)LF(3) complex, in which the relative position of the N-terminal alpha-helices in the three LFs determines which factor is translocated first. Proteolytic activation by FURIN cleaves the protein in two parts, PA-20 and PA-63; the latter is the mature protein. The cleavage occurs at the cell surface and probably in the serum of infected animals as well; both native and cleaved PA are able to bind to the cell receptor. The release of PA-20 from the remaining receptor-bound PA-63 exposes the binding site for EF and LF, and promotes oligomerization and internalization of the protein.

The protein localises to the secreted. It is found in the host cell membrane. The protein resides in the host endosome membrane. In terms of biological role, protective antigen constitutes one of the three proteins composing the anthrax toxin; it mediates attachment to host cells and translocation of edema factor (EF) and lethal factor (LF) into the host cytoplasm. PA associated with LF forms the lethal toxin (LeTx) and causes death when injected; PA associated with EF forms the edema toxin (EdTx) and produces edema. PA induces immunity to infection with anthrax. Mediates the attachment to host cells by binding host cell receptors ANTXR1 and ANTXR2. Following host cell surface attachment, PA is cleaved by FURIN to generate the PA-63 (Protective antigen PA-63) form, which constitutes the mature form of the protein that oligomerizes and forms a pore to translocate the enzymatic toxin components edema factor (EF) and lethal factor (LF) into the host cytosol. Functionally, mature form that oligomerizes and forms a pore to translocate the enzymatic toxin components edema factor (EF) and lethal factor (LF) into the host cytosol. Following attachment to host cell receptors and cleavage by FURIN, homooligomerizes to form ring-shaped oligomers that are in a pre-pore conformation, and associates with EF and LF. Toxin-leaded complexes are then endocytosed in a clathrin-dependent process, followed by a conformational change of oligomerized PA-63 from the pre-pore to pore state, which is triggered by the low pH in the endosome. Once active, the pore mediates unfolding of EF and LF, which pass through the pore and translocate into the host cytosol. In Bacillus anthracis, this protein is Protective antigen (pagA).